We begin with the raw amino-acid sequence, 759 residues long: Protein hunchback (759 aa).

2 disordered regions span residues Glu30–Ser51 and Ser171–Lys215. Positions Ser39–Ser51 are enriched in polar residues. Thr179 is subject to Phosphothreonine. Residues Ser189, Ser208, Ser210, and Ser211 each carry the phosphoserine modification. Residues Glu199–Lys215 show a composition bias toward basic and acidic residues. 4 consecutive C2H2-type zinc fingers follow at residues Tyr241 to His263, Leu270 to His292, Phe298 to His320, and Tyr326 to His350. 3 disordered regions span residues Leu366 to Leu419, Gln513 to Pro565, and Met606 to Ser696. 2 stretches are compositionally biased toward low complexity: residues Val399–Leu419 and Gln513–Ser522. Over residues Asp523 to Glu532 the composition is skewed to acidic residues. Phosphoserine occurs at positions 537 and 540. Residues Ala655–Ser696 are compositionally biased toward low complexity. C2H2-type zinc fingers lie at residues Tyr706–His728 and Phe734–His758.

The protein belongs to the hunchback C2H2-type zinc-finger protein family.

The protein localises to the nucleus. Gap class segmentation protein that controls development of head structures. The sequence is that of Protein hunchback from Drosophila yakuba (Fruit fly).